We begin with the raw amino-acid sequence, 258 residues long: Adenylate kinase (258 aa).

52–57 serves as a coordination point for ATP; sequence GAGKGT. The segment at 72–101 is NMP; that stretch reads ATGDMLRSQVAKKTELGKEAKKIMDQGGLV. Residues threonine 73, arginine 78, 99–101, 128–131, and glutamine 135 each bind AMP; these read GLV and GFPR. Positions 169-206 are LID; sequence GRLVHPASGRSYHKVFNPPKQEMKDDITGEPLIQRSDD. ATP is bound by residues arginine 170 and 179-180; that span reads SY. AMP is bound by residues arginine 203 and arginine 214. Residue glutamine 242 coordinates ATP.

The protein belongs to the adenylate kinase family. AK2 subfamily. In terms of assembly, monomer.

Its subcellular location is the cytoplasm. It is found in the cytosol. The protein localises to the mitochondrion intermembrane space. The enzyme catalyses AMP + ATP = 2 ADP. Catalyzes the reversible transfer of the terminal phosphate group between ATP and AMP. Plays an important role in cellular energy homeostasis and in adenine nucleotide metabolism. Adenylate kinase activity is critical for regulation of the phosphate utilization and the AMP de novo biosynthesis pathways. The sequence is that of Adenylate kinase (adk1) from Aspergillus oryzae (strain ATCC 42149 / RIB 40) (Yellow koji mold).